The chain runs to 252 residues: tRNA (guanine-N(1)-)-methyltransferase (252 aa).

S-adenosyl-L-methionine-binding positions include Gly-116 and 135-140 (LGDYVL).

This sequence belongs to the RNA methyltransferase TrmD family. Homodimer.

Its subcellular location is the cytoplasm. It catalyses the reaction guanosine(37) in tRNA + S-adenosyl-L-methionine = N(1)-methylguanosine(37) in tRNA + S-adenosyl-L-homocysteine + H(+). Functionally, specifically methylates guanosine-37 in various tRNAs. This is tRNA (guanine-N(1)-)-methyltransferase from Limosilactobacillus fermentum (strain NBRC 3956 / LMG 18251) (Lactobacillus fermentum).